The chain runs to 75 residues: Small ribosomal subunit protein bS16 (75 aa).

The protein belongs to the bacterial ribosomal protein bS16 family.

In Aliarcobacter butzleri (strain RM4018) (Arcobacter butzleri), this protein is Small ribosomal subunit protein bS16.